The sequence spans 322 residues: MSAKSRTIGIIGAPFSKGQPRGGVEEGPTVLRKAGLLEKLKEQECDVKDYGDLPFADIPNDSPFQIVKNPRSVGKASEQLAGKVAEVKKNGRISLVLGGDHSLAIGSISGHARVHPDLGVIWVDAHTDINTPLTTTSGNLHGQPVSFLLKELKGKIPDVPGFSWVTPCISAKDIVYIGLRDVDPGEHYILKTLGIKYFSMTEVDRLGIGKVMEETLSYLLGRKKRPIHLSFDVDGLDPSFTPATGTPVVGGLTYREGLYITEEIYKTGLLSGLDIMEVNPSLGKTPEEVTRTVNTAVAITLACFGLAREGNHKPIDYLNPPK.

Lys17 is modified (N6-succinyllysine). A phosphoserine mark is found at Ser62 and Ser72. Lys75 carries the N6-succinyllysine modification. Mn(2+)-binding residues include His101, Asp124, His126, and Asp128. Substrate is bound by residues 126-130 (HTDIN) and 137-139 (SGN). Phosphoserine is present on Ser163. Asp183 is a binding site for substrate. Ser217 carries the phosphoserine modification. The Mn(2+) site is built by Asp232 and Asp234. Substrate is bound by residues Thr246 and Glu277.

It belongs to the arginase family. As to quaternary structure, homotrimer. Interacts with CMTM6. Mn(2+) serves as cofactor. Within the immune system initially reported to be selectively expressed in granulocytes (polymorphonuclear leukocytes [PMNs]). Also detected in macrophages mycobacterial granulomas. Expressed in group2 innate lymphoid cells (ILC2s) during lung disease.

It is found in the cytoplasm. It localises to the cytoplasmic granule. The catalysed reaction is L-arginine + H2O = urea + L-ornithine. It participates in nitrogen metabolism; urea cycle; L-ornithine and urea from L-arginine: step 1/1. Functionally, key element of the urea cycle converting L-arginine to urea and L-ornithine, which is further metabolized into metabolites proline and polyamides that drive collagen synthesis and bioenergetic pathways critical for cell proliferation, respectively; the urea cycle takes place primarily in the liver and, to a lesser extent, in the kidneys. In terms of biological role, functions in L-arginine homeostasis in nonhepatic tissues characterized by the competition between nitric oxide synthase (NOS) and arginase for the available intracellular substrate arginine. Arginine metabolism is a critical regulator of innate and adaptive immune responses. Involved in an antimicrobial effector pathway in polymorphonuclear granulocytes (PMN). Upon PMN cell death is liberated from the phagolysosome and depletes arginine in the microenvironment leading to suppressed T cell and natural killer (NK) cell proliferation and cytokine secretion. In group 2 innate lymphoid cells (ILC2s) promotes acute type 2 inflammation in the lung and is involved in optimal ILC2 proliferation but not survival. In humans, the immunological role in the monocytic/macrophage/dendritic cell (DC) lineage is unsure. The protein is Arginase-1 (ARG1) of Homo sapiens (Human).